The primary structure comprises 865 residues: Protein translocase subunit SecA (865 aa).

ATP contacts are provided by residues Q93, 111 to 115 (GEGKT), and D501. Zn(2+) is bound by residues C841, C843, C852, and C853.

The protein belongs to the SecA family. In terms of assembly, monomer and homodimer. Part of the essential Sec protein translocation apparatus which comprises SecA, SecYEG and auxiliary proteins SecDF-YajC and YidC. The cofactor is Zn(2+).

It is found in the cell inner membrane. Its subcellular location is the cytoplasm. It carries out the reaction ATP + H2O + cellular proteinSide 1 = ADP + phosphate + cellular proteinSide 2.. In terms of biological role, part of the Sec protein translocase complex. Interacts with the SecYEG preprotein conducting channel. Has a central role in coupling the hydrolysis of ATP to the transfer of proteins into and across the cell membrane, serving as an ATP-driven molecular motor driving the stepwise translocation of polypeptide chains across the membrane. The sequence is that of Protein translocase subunit SecA from Helicobacter pylori (strain P12).